The chain runs to 124 residues: Small ribosomal subunit protein uS12 (124 aa).

Position 89 is a 3-methylthioaspartic acid (D89).

Belongs to the universal ribosomal protein uS12 family. In terms of assembly, part of the 30S ribosomal subunit. Contacts proteins S8 and S17. May interact with IF1 in the 30S initiation complex.

Its function is as follows. With S4 and S5 plays an important role in translational accuracy. Interacts with and stabilizes bases of the 16S rRNA that are involved in tRNA selection in the A site and with the mRNA backbone. Located at the interface of the 30S and 50S subunits, it traverses the body of the 30S subunit contacting proteins on the other side and probably holding the rRNA structure together. The combined cluster of proteins S8, S12 and S17 appears to hold together the shoulder and platform of the 30S subunit. The polypeptide is Small ribosomal subunit protein uS12 (Hydrogenovibrio crunogenus (strain DSM 25203 / XCL-2) (Thiomicrospira crunogena)).